A 225-amino-acid chain; its full sequence is Myelin-associated neurite-outgrowth inhibitor (225 aa).

At 1-58 (MNPVYSPGSSGVPYANAKGIGYPAGFPMGYAAAAPAYSPNMYAGPNPAFQQELEHPAH) the chain is on the cytoplasmic side. A helical membrane pass occupies residues 59-75 (VSSGVQMFMFGHAFSVA). The Extracellular portion of the chain corresponds to 76–173 (RNGAIPSGYT…PAPIQSPRGN (98 aa)). Residues 174–193 (GVAMGMVAGTTMAMSAGTLL) form a helical membrane-spanning segment. Topologically, residues 194–225 (TSHYPSPVAPQVTMPTYRPPGTPTYSYVPPQW) are cytoplasmic.

Belongs to the FAM168 family.

Its subcellular location is the cytoplasm. The protein resides in the perinuclear region. The protein localises to the cell membrane. It is found in the cell projection. It localises to the axon. Its function is as follows. Inhibitor of neuronal axonal outgrowth. The protein is Myelin-associated neurite-outgrowth inhibitor (fam168b) of Xenopus laevis (African clawed frog).